An 89-amino-acid chain; its full sequence is DNA/RNA-binding protein Alba (89 aa).

An N6-acetyllysine modification is found at lysine 11.

Belongs to the histone-like Alba family. Post-translationally, acetylated. Acetylation at Lys-11 decreases DNA-binding affinity.

The protein localises to the cytoplasm. It is found in the chromosome. Binds double-stranded DNA tightly but without sequence specificity. Involved in DNA compaction. This is DNA/RNA-binding protein Alba from Thermoplasma acidophilum (strain ATCC 25905 / DSM 1728 / JCM 9062 / NBRC 15155 / AMRC-C165).